Reading from the N-terminus, the 487-residue chain is Cysteine--tRNA ligase (487 aa).

Zn(2+) is bound at residue Cys29. A 'HIGH' region motif is present at residues 31 to 41 (VTVYDYNHVGH). Zn(2+)-binding residues include Cys209, His234, and Glu238. The 'KMSKS' region motif lies at 266–270 (KMSKS). Residue Lys269 participates in ATP binding.

It belongs to the class-I aminoacyl-tRNA synthetase family. In terms of assembly, monomer. Zn(2+) serves as cofactor.

Its subcellular location is the cytoplasm. It carries out the reaction tRNA(Cys) + L-cysteine + ATP = L-cysteinyl-tRNA(Cys) + AMP + diphosphate. The protein is Cysteine--tRNA ligase of Sulfurihydrogenibium sp. (strain YO3AOP1).